A 128-amino-acid chain; its full sequence is Large ribosomal subunit protein bL17 (128 aa).

Belongs to the bacterial ribosomal protein bL17 family. In terms of assembly, part of the 50S ribosomal subunit. Contacts protein L32.

The polypeptide is Large ribosomal subunit protein bL17 (Pseudomonas fluorescens (strain ATCC BAA-477 / NRRL B-23932 / Pf-5)).